The primary structure comprises 92 residues: Signal recognition particle 19 kDa protein (92 aa).

Belongs to the SRP19 family. Part of the signal recognition particle protein translocation system, which is composed of SRP and FtsY. Archaeal SRP consists of a 7S RNA molecule of 300 nucleotides and two protein subunits: SRP54 and SRP19.

The protein resides in the cytoplasm. Involved in targeting and insertion of nascent membrane proteins into the cytoplasmic membrane. Binds directly to 7S RNA and mediates binding of the 54 kDa subunit of the SRP. The sequence is that of Signal recognition particle 19 kDa protein from Halobacterium salinarum (strain ATCC 29341 / DSM 671 / R1).